The chain runs to 1331 residues: DNA-directed RNA polymerase subunit beta' (1331 aa).

Residues Cys-220, Cys-293, Cys-300, and Cys-303 each contribute to the Zn(2+) site. Disordered regions lie at residues 1236–1257 (DFVD…TNDN) and 1294–1331 (ISGD…MKDQ). The span at 1243 to 1257 (SRSPNGYSNVVTNDN) shows a compositional bias: polar residues.

This sequence belongs to the RNA polymerase beta' chain family. RpoC2 subfamily. As to quaternary structure, in cyanobacteria the RNAP catalytic core is composed of 2 alpha, 1 beta, 1 beta', 1 gamma and 1 omega subunit. When a sigma factor is associated with the core the holoenzyme is formed, which can initiate transcription. The cofactor is Zn(2+).

The enzyme catalyses RNA(n) + a ribonucleoside 5'-triphosphate = RNA(n+1) + diphosphate. In terms of biological role, DNA-dependent RNA polymerase catalyzes the transcription of DNA into RNA using the four ribonucleoside triphosphates as substrates. The polypeptide is DNA-directed RNA polymerase subunit beta' (Picosynechococcus sp. (strain ATCC 27264 / PCC 7002 / PR-6) (Agmenellum quadruplicatum)).